The following is a 374-amino-acid chain: UPF0496 protein At4g34320 (374 aa).

Transmembrane regions (helical) follow at residues 215 to 235 and 238 to 258; these read IIFV…AAMA and PVAA…GKWI.

Belongs to the UPF0496 family.

The protein resides in the membrane. This chain is UPF0496 protein At4g34320, found in Arabidopsis thaliana (Mouse-ear cress).